Here is a 943-residue protein sequence, read N- to C-terminus: Translation initiation factor IF-2 (943 aa).

A disordered region spans residues 29–357; that stretch reads LSVKSHSSSV…KPVTERKFHE (329 aa). 5 stretches are compositionally biased toward basic and acidic residues: residues 69-82, 112-137, 145-155, 163-196, and 224-253; these read PKEEKVEPKVDKAS, FKAEREARAKAEAERRKNGGGRDNRN, QGKRHNNDRRN, DHNKGNRDNSTNHDRNFQGKLRNDQNQNNRRDNA, and RQSETRFREEKAAEQRRAKEQEKARKEKQQ. Residues 254–266 show a composition bias toward low complexity; sequence AEVAVQKAAAETK. Positions 296 to 309 are enriched in basic and acidic residues; the sequence is KSRDNRRVNEDGPK. A compositionally biased stretch (low complexity) spans 313–332; that stretch reads NNKWNNQNQVRNQRNSNWNK. The region spanning 445 to 614 is the tr-type G domain; sequence ERAPVVTIMG…LLVAEVEELK (170 aa). Residues 454-461 form a G1 region; it reads GHVDHGKT. 454–461 provides a ligand contact to GTP; that stretch reads GHVDHGKT. The interval 479 to 483 is G2; that stretch reads GITQH. Positions 500–503 are G3; that stretch reads DTPG. Residues 500-504 and 554-557 each bind GTP; these read DTPGH and NKID. Residues 554 to 557 are G4; it reads NKID. Residues 590 to 592 form a G5 region; that stretch reads SAK.

It belongs to the TRAFAC class translation factor GTPase superfamily. Classic translation factor GTPase family. IF-2 subfamily.

The protein localises to the cytoplasm. One of the essential components for the initiation of protein synthesis. Protects formylmethionyl-tRNA from spontaneous hydrolysis and promotes its binding to the 30S ribosomal subunits. Also involved in the hydrolysis of GTP during the formation of the 70S ribosomal complex. This Streptococcus thermophilus (strain CNRZ 1066) protein is Translation initiation factor IF-2.